The sequence spans 238 residues: Ribosomal RNA small subunit methyltransferase G (238 aa).

S-adenosyl-L-methionine is bound by residues Gly77, Phe82, 128–129, and Arg147; that span reads AE.

This sequence belongs to the methyltransferase superfamily. RNA methyltransferase RsmG family.

The protein localises to the cytoplasm. Its function is as follows. Specifically methylates the N7 position of guanine in position 535 of 16S rRNA. This Geobacillus sp. (strain WCH70) protein is Ribosomal RNA small subunit methyltransferase G.